We begin with the raw amino-acid sequence, 172 residues long: Small ribosomal subunit protein uS5 (172 aa).

Positions 17–80 constitute an S5 DRBM domain; the sequence is LREKMISVNR…EQARRNMFKV (64 aa).

This sequence belongs to the universal ribosomal protein uS5 family. As to quaternary structure, part of the 30S ribosomal subunit. Contacts proteins S4 and S8.

In terms of biological role, with S4 and S12 plays an important role in translational accuracy. Located at the back of the 30S subunit body where it stabilizes the conformation of the head with respect to the body. The polypeptide is Small ribosomal subunit protein uS5 (Burkholderia orbicola (strain AU 1054)).